The sequence spans 353 residues: WD repeat-containing protein 55 (353 aa).

WD repeat units lie at residues 4-43, 49-88, 92-130, 133-172, 175-214, 218-257, and 260-299; these read DLGA…SLVR, AHKE…QVAH, AHED…CSHE, AHED…VQSQ, FSED…DCSD, DLAP…IIQP, and SHDY…EGSN. The segment at 300-353 is disordered; it reads VNSGNASGAAEDSDSDNDGMDLDNDPSKSSKGSKRKTKSKANTLNATNNFFADL. Residues 310–323 are compositionally biased toward acidic residues; the sequence is EDSDSDNDGMDLDN. A compositionally biased stretch (low complexity) spans 339–353; it reads KANTLNATNNFFADL.

The protein belongs to the WD repeat WDR55 family. In terms of assembly, interacts with DDB1A. Highly expressed in roots. Expressed in cotyledons, leaves, buds and flowers.

Its subcellular location is the nucleus. The protein resides in the cytoplasm. Required for male and female gametogenesis, seed development, and embryo and endosperm development at early stages. Involved in the establishment of bilateral symmetry in the transition from the globular to the heart embryo stage. May act in the frame of a CRL4 complex. Required for proper vegetative growth and organization of the adult plant body. May play a role in hormonal control of plant development. The protein is WD repeat-containing protein 55 of Arabidopsis thaliana (Mouse-ear cress).